Reading from the N-terminus, the 654-residue chain is U-box domain-containing protein 12 (654 aa).

Positions I255–E329 constitute a U-box domain. Residues E329–D352 form a disordered region. A compositionally biased stretch (low complexity) spans S337–A349. 5 ARM repeats span residues N387 to I427, E430 to V469, D471 to I510, Q512 to S551, and P553 to S592.

The catalysed reaction is S-ubiquitinyl-[E2 ubiquitin-conjugating enzyme]-L-cysteine + [acceptor protein]-L-lysine = [E2 ubiquitin-conjugating enzyme]-L-cysteine + N(6)-ubiquitinyl-[acceptor protein]-L-lysine.. It functions in the pathway protein modification; protein ubiquitination. Its function is as follows. Functions as an E3 ubiquitin ligase. This is U-box domain-containing protein 12 (PUB12) from Arabidopsis thaliana (Mouse-ear cress).